The sequence spans 530 residues: 26S proteasome non-ATPase regulatory subunit 3 (530 aa).

The span at 1-16 (MKQEGSARRRGADKAK) shows a compositional bias: basic and acidic residues. The segment at 1 to 65 (MKQEGSARRR…TEHSQRELDT (65 aa)) is disordered. The segment covering 17–30 (PPPGGEQEPPPPAP) has biased composition (pro residues). A Glycyl lysine isopeptide (Lys-Gly) (interchain with G-Cter in SUMO1); alternate cross-link involves residue lysine 36. Residue lysine 36 forms a Glycyl lysine isopeptide (Lys-Gly) (interchain with G-Cter in SUMO2); alternate linkage. Residues 282–461 (ARYLYYTGRI…GYVQSKEMID (180 aa)) enclose the PCI domain. Phosphoserine occurs at positions 414 and 426. A disordered region spans residues 496-530 (SYNKDLESAEERREREQQDLEFAKEMAEDDDDSFP). Over residues 497–521 (YNKDLESAEERREREQQDLEFAKEM) the composition is skewed to basic and acidic residues.

The protein belongs to the proteasome subunit S3 family. In terms of assembly, component of the 19S proteasome regulatory particle complex. The 26S proteasome consists of a 20S core particle (CP) and two 19S regulatory subunits (RP). The regulatory particle is made of a lid composed of 9 subunits including PSMD3, a base containing 6 ATPases and few additional components. Interacts with UBQLN1 (via ubiquitin-like domain). Interacts with ERCC6.

Functionally, component of the 26S proteasome, a multiprotein complex involved in the ATP-dependent degradation of ubiquitinated proteins. This complex plays a key role in the maintenance of protein homeostasis by removing misfolded or damaged proteins, which could impair cellular functions, and by removing proteins whose functions are no longer required. Therefore, the proteasome participates in numerous cellular processes, including cell cycle progression, apoptosis, or DNA damage repair. The chain is 26S proteasome non-ATPase regulatory subunit 3 (Psmd3) from Mus musculus (Mouse).